Consider the following 207-residue polypeptide: MQIIEKYFKHLSPEQVKQFGALHSLYTEWNEKINVVSRKDIDQLYERHVLHSLGIAKVMAFKPGTRILDVGTGGGFPGIPLSILFPESDFHLIDSIGKKIKVVEEVSAGAGIKNIRTTHGRAEDVTDRYHFVVSRAVTRFKPFWGWVAKKFSDEQFNDLNNGILYLKGGDLDEEIQELNRPAYEYDLNMFFEEEFFDTKKVVHVPAF.

S-adenosyl-L-methionine-binding positions include Gly-71, Phe-76, 122–123 (AE), and Arg-135.

This sequence belongs to the methyltransferase superfamily. RNA methyltransferase RsmG family.

It is found in the cytoplasm. Functionally, specifically methylates the N7 position of a guanine in 16S rRNA. The protein is Ribosomal RNA small subunit methyltransferase G of Cytophaga hutchinsonii (strain ATCC 33406 / DSM 1761 / CIP 103989 / NBRC 15051 / NCIMB 9469 / D465).